The following is a 777-amino-acid chain: Polyribonucleotide nucleotidyltransferase (777 aa).

Positions 494 and 500 each coordinate Mg(2+). Residues 561–620 form the KH domain; that stretch reads PRIITLQIDPSKIGALIGPGGKTIRSIIEQTGAQIDVEDDGRVFVTTPDADGARMAQSLI. One can recognise an S1 motif domain in the interval 630 to 699; the sequence is GEIFTGKVVR…GTGKLSLSRR (70 aa). The segment at 703-777 is disordered; it reads TGETAEQRKS…NDRRGGGFRG (75 aa). Positions 718 to 727 are enriched in gly residues; the sequence is GPRGGGGGGD. 2 stretches are compositionally biased toward basic and acidic residues: residues 728–761 and 768–777; these read RGPR…DRGP and NDRRGGGFRG.

This sequence belongs to the polyribonucleotide nucleotidyltransferase family. Mg(2+) serves as cofactor.

The protein resides in the cytoplasm. The enzyme catalyses RNA(n+1) + phosphate = RNA(n) + a ribonucleoside 5'-diphosphate. Its function is as follows. Involved in mRNA degradation. Catalyzes the phosphorolysis of single-stranded polyribonucleotides processively in the 3'- to 5'-direction. This is Polyribonucleotide nucleotidyltransferase from Herpetosiphon aurantiacus (strain ATCC 23779 / DSM 785 / 114-95).